A 52-amino-acid polypeptide reads, in one-letter code: Defensin-like protein 2B (52 aa).

Cystine bridges form between C4–C52, C16–C37, C22–C46, and C26–C48.

In terms of assembly, forms oligomers in its native state.

Functionally, possesses antifungal activity sensitive to inorganic cations. This Sinapis alba (White mustard) protein is Defensin-like protein 2B.